The primary structure comprises 726 residues: AP-1 complex subunit beta-1 (726 aa).

This sequence belongs to the adaptor complexes large subunit family. Adaptor protein complex 1 (AP-1) is a heterotetramer composed of two large adaptins (gamma-type subunit APL4 and beta-type subunit APL2), a medium adaptin (mu-type subunit APM1) and a small adaptin (sigma-type subunit APS1). Interacts with CHC1. Interacts with APM2, probably forming an alternative AP-1-like complex.

It is found in the cell membrane. It localises to the membrane. The protein resides in the coated pit. Functionally, adaptins are components of the adaptor complexes which link clathrin to receptors in coated vesicles. Clathrin-associated protein complexes are believed to interact with the cytoplasmic tails of membrane proteins, leading to their selection and concentration. The AP-1 complex interacts directly with clathrin. In Saccharomyces cerevisiae (strain ATCC 204508 / S288c) (Baker's yeast), this protein is AP-1 complex subunit beta-1 (APL2).